The sequence spans 235 residues: CD-NTase-associated protein 13 (235 aa).

A run of 2 helical transmembrane segments spans residues 14–34 (IVHHVSTSLNIISFIIVLIWI) and 45–65 (IIFTVNLEAIVVFISILIVGL).

This sequence in the C-terminal section; belongs to the bacterial STING family. In terms of assembly, homodimer.

The protein localises to the cell inner membrane. Effector protein of a CBASS antivirus system. CBASS (cyclic oligonucleotide-based antiphage signaling system) provides immunity against bacteriophage. The CD-NTase protein synthesizes cyclic nucleotides in response to infection; these serve as specific second messenger signals. The signals activate a diverse range of effectors, leading to bacterial cell death and thus abortive phage infection. A type I-D(GG) CBASS system. In terms of biological role, binds cyclic dinucleotides: binds c-di-GMP (synthesized by the cognate CdnE encoded upstream in the same operon), cyclic 3'3'-cyclic GMP-AMP (3'3'-cGAMP) but not cUMP-AMP. The effector protein for this CBASS system, its activity is stimulated by c-di-GMP and leads to cell death. In Flavobacteriaceae sp. genome_bin_11, this protein is CD-NTase-associated protein 13.